We begin with the raw amino-acid sequence, 220 residues long: Thiamine-phosphate synthase (220 aa).

4-amino-2-methyl-5-(diphosphooxymethyl)pyrimidine contacts are provided by residues 38 to 42 (QYRDK) and N70. Mg(2+) is bound by residues D71 and D90. T109 lines the 4-amino-2-methyl-5-(diphosphooxymethyl)pyrimidine pocket. Position 135–137 (135–137 (TVS)) interacts with 2-[(2R,5Z)-2-carboxy-4-methylthiazol-5(2H)-ylidene]ethyl phosphate. K138 contributes to the 4-amino-2-methyl-5-(diphosphooxymethyl)pyrimidine binding site. Residues G171 and 191-192 (IS) contribute to the 2-[(2R,5Z)-2-carboxy-4-methylthiazol-5(2H)-ylidene]ethyl phosphate site.

The protein belongs to the thiamine-phosphate synthase family. Requires Mg(2+) as cofactor.

The enzyme catalyses 2-[(2R,5Z)-2-carboxy-4-methylthiazol-5(2H)-ylidene]ethyl phosphate + 4-amino-2-methyl-5-(diphosphooxymethyl)pyrimidine + 2 H(+) = thiamine phosphate + CO2 + diphosphate. It catalyses the reaction 2-(2-carboxy-4-methylthiazol-5-yl)ethyl phosphate + 4-amino-2-methyl-5-(diphosphooxymethyl)pyrimidine + 2 H(+) = thiamine phosphate + CO2 + diphosphate. It carries out the reaction 4-methyl-5-(2-phosphooxyethyl)-thiazole + 4-amino-2-methyl-5-(diphosphooxymethyl)pyrimidine + H(+) = thiamine phosphate + diphosphate. The protein operates within cofactor biosynthesis; thiamine diphosphate biosynthesis; thiamine phosphate from 4-amino-2-methyl-5-diphosphomethylpyrimidine and 4-methyl-5-(2-phosphoethyl)-thiazole: step 1/1. Condenses 4-methyl-5-(beta-hydroxyethyl)thiazole monophosphate (THZ-P) and 2-methyl-4-amino-5-hydroxymethyl pyrimidine pyrophosphate (HMP-PP) to form thiamine monophosphate (TMP). The polypeptide is Thiamine-phosphate synthase (Agrobacterium fabrum (strain C58 / ATCC 33970) (Agrobacterium tumefaciens (strain C58))).